A 754-amino-acid polypeptide reads, in one-letter code: Photosystem I P700 chlorophyll a apoprotein A1 (754 aa).

8 helical membrane passes run 72–95 (IFSA…FHGA), 158–181 (LYCT…FHYH), 197–221 (MNHH…HVSL), 293–311 (TAHH…GHMY), 351–374 (WHAQ…HHMY), 390–416 (LSLF…IFMV), 438–460 (AIIS…LYIH), and 535–553 (FMVH…LILL). C577 and C586 together coordinate [4Fe-4S] cluster. A run of 2 helical transmembrane segments spans residues 593-614 (HVFL…HFSW) and 668-690 (LSAY…MFLF). H679 is a binding site for chlorophyll a'. Residues M687 and Y695 each coordinate chlorophyll a. W696 contacts phylloquinone. The chain crosses the membrane as a helical span at residues 728 to 748 (AVGVAHYLLGGIVTTWAFFLA).

It belongs to the PsaA/PsaB family. As to quaternary structure, the PsaA/B heterodimer binds the P700 chlorophyll special pair and subsequent electron acceptors. PSI consists of a core antenna complex that captures photons, and an electron transfer chain that converts photonic excitation into a charge separation. The cyanobacterial PSI reaction center is composed of one copy each of PsaA,B,C,D,E,F,I,J,K,L,M and X, and forms trimeric complexes. Requires PSI electron transfer chain: 5 chlorophyll a, 1 chlorophyll a', 2 phylloquinones and 3 4Fe-4S clusters. PSI core antenna: 90 chlorophyll a, 22 carotenoids, 3 phospholipids and 1 galactolipid. P700 is a chlorophyll a/chlorophyll a' dimer, A0 is one or more chlorophyll a, A1 is one or both phylloquinones and FX is a shared 4Fe-4S iron-sulfur center. as cofactor.

The protein localises to the cellular thylakoid membrane. It catalyses the reaction reduced [plastocyanin] + hnu + oxidized [2Fe-2S]-[ferredoxin] = oxidized [plastocyanin] + reduced [2Fe-2S]-[ferredoxin]. Functionally, psaA and PsaB bind P700, the primary electron donor of photosystem I (PSI), as well as the electron acceptors A0, A1 and FX. PSI is a plastocyanin/cytochrome c6-ferredoxin oxidoreductase, converting photonic excitation into a charge separation, which transfers an electron from the donor P700 chlorophyll pair to the spectroscopically characterized acceptors A0, A1, FX, FA and FB in turn. Oxidized P700 is reduced on the lumenal side of the thylakoid membrane by plastocyanin or cytochrome c6. This chain is Photosystem I P700 chlorophyll a apoprotein A1, found in Rippkaea orientalis (strain PCC 8801 / RF-1) (Cyanothece sp. (strain PCC 8801)).